Here is a 343-residue protein sequence, read N- to C-terminus: MLKTIALDAMGGDHGPKVIVPAALSILKKHPKVKLILVGKEDQLALLIPEKNRKSFGQRLEIIHASEEVGMDEPPSQALRTKKNSSMRVAINLVKEGQAHACVSAGNTGALMATARYVLKTLPGIDRPAIIAAFPTKNEREVRVLDLGANVDSTPENLYQFAVMGSILSSAAHNIRNPRIGLLNVGEEEIKGNELVKKANELFETRKTINYIGYVEGNTIFNNIADVVVCDGFVGNAVLKASEGVAQLIKQHAKEAFSEAWWTKLALLPAIPILKRLIRRVDPERYNGATFLGLNGIVVKSHGSANIKAFVCAVEEAIFQVDKNIPQLIKEEVAHILKEFENK.

The protein belongs to the PlsX family. Homodimer. Probably interacts with PlsY.

It localises to the cytoplasm. It catalyses the reaction a fatty acyl-[ACP] + phosphate = an acyl phosphate + holo-[ACP]. The protein operates within lipid metabolism; phospholipid metabolism. Its function is as follows. Catalyzes the reversible formation of acyl-phosphate (acyl-PO(4)) from acyl-[acyl-carrier-protein] (acyl-ACP). This enzyme utilizes acyl-ACP as fatty acyl donor, but not acyl-CoA. This chain is Phosphate acyltransferase, found in Coxiella burnetii (strain Dugway 5J108-111).